The following is a 605-amino-acid chain: UvrABC system protein C (605 aa).

The region spanning 15–92 (GLPGCYLMKN…IQKHQPYFNI (78 aa)) is the GIY-YIG domain. A UVR domain is found at 197–232 (GHAKKDLTQRMEKAAADMAYERAGDLRDQIRYIEAT).

Belongs to the UvrC family. In terms of assembly, interacts with UvrB in an incision complex.

The protein localises to the cytoplasm. In terms of biological role, the UvrABC repair system catalyzes the recognition and processing of DNA lesions. UvrC both incises the 5' and 3' sides of the lesion. The N-terminal half is responsible for the 3' incision and the C-terminal half is responsible for the 5' incision. The polypeptide is UvrABC system protein C (Levilactobacillus brevis (strain ATCC 367 / BCRC 12310 / CIP 105137 / JCM 1170 / LMG 11437 / NCIMB 947 / NCTC 947) (Lactobacillus brevis)).